The chain runs to 213 residues: Pyridoxine/pyridoxamine 5'-phosphate oxidase (213 aa).

Substrate contacts are provided by residues 8–11 and K66; that span reads RKNY. FMN-binding positions include 61–66, 76–77, R82, K83, and Q105; these read RIVLIK and FT. Substrate-binding residues include Y123, R127, and S131. Residues 140–141 and W184 each bind FMN; that span reads QS. Substrate is bound at residue 190–192; the sequence is RLH. R194 is an FMN binding site.

It belongs to the pyridoxamine 5'-phosphate oxidase family. Homodimer. FMN serves as cofactor.

The catalysed reaction is pyridoxamine 5'-phosphate + O2 + H2O = pyridoxal 5'-phosphate + H2O2 + NH4(+). The enzyme catalyses pyridoxine 5'-phosphate + O2 = pyridoxal 5'-phosphate + H2O2. The protein operates within cofactor metabolism; pyridoxal 5'-phosphate salvage; pyridoxal 5'-phosphate from pyridoxamine 5'-phosphate: step 1/1. It participates in cofactor metabolism; pyridoxal 5'-phosphate salvage; pyridoxal 5'-phosphate from pyridoxine 5'-phosphate: step 1/1. Its function is as follows. Catalyzes the oxidation of either pyridoxine 5'-phosphate (PNP) or pyridoxamine 5'-phosphate (PMP) into pyridoxal 5'-phosphate (PLP). This is Pyridoxine/pyridoxamine 5'-phosphate oxidase from Paraburkholderia phytofirmans (strain DSM 17436 / LMG 22146 / PsJN) (Burkholderia phytofirmans).